Here is a 121-residue protein sequence, read N- to C-terminus: Large ribosomal subunit protein uL18 (121 aa).

Over residues 1–22 (MIKKPDKKTLRQGKHKRVRRKV) the composition is skewed to basic residues. The tract at residues 1–23 (MIKKPDKKTLRQGKHKRVRRKVA) is disordered.

The protein belongs to the universal ribosomal protein uL18 family. As to quaternary structure, part of the 50S ribosomal subunit; part of the 5S rRNA/L5/L18/L25 subcomplex. Contacts the 5S and 23S rRNAs.

Its function is as follows. This is one of the proteins that bind and probably mediate the attachment of the 5S RNA into the large ribosomal subunit, where it forms part of the central protuberance. The protein is Large ribosomal subunit protein uL18 of Syntrophomonas wolfei subsp. wolfei (strain DSM 2245B / Goettingen).